The chain runs to 637 residues: 1,4-alpha-glucan branching enzyme GlgB (637 aa).

Residue Asp307 is the Nucleophile of the active site. Glu361 serves as the catalytic Proton donor.

It belongs to the glycosyl hydrolase 13 family. GlgB subfamily. As to quaternary structure, monomer.

The catalysed reaction is Transfers a segment of a (1-&gt;4)-alpha-D-glucan chain to a primary hydroxy group in a similar glucan chain.. The protein operates within glycan biosynthesis; glycogen biosynthesis. In terms of biological role, catalyzes the formation of the alpha-1,6-glucosidic linkages in glycogen by scission of a 1,4-alpha-linked oligosaccharide from growing alpha-1,4-glucan chains and the subsequent attachment of the oligosaccharide to the alpha-1,6 position. This chain is 1,4-alpha-glucan branching enzyme GlgB, found in Oceanobacillus iheyensis (strain DSM 14371 / CIP 107618 / JCM 11309 / KCTC 3954 / HTE831).